The sequence spans 531 residues: GPI alpha-1,2-mannosyltransferase 3 (531 aa).

Asn-84 carries an N-linked (GlcNAc...) asparagine glycan. Transmembrane regions (helical) follow at residues 99–119 (GLRG…LYLL), 124–144 (VWFL…IADV), and 174–196 (YCAT…LYYY). An N-linked (GlcNAc...) asparagine glycan is attached at Asn-204. 6 consecutive transmembrane segments (helical) span residues 210 to 230 (LICV…WIPL), 249 to 269 (YLPI…IFFG), 303 to 323 (GVPV…MVTP), 328 to 348 (ILLV…HKEF), 350 to 370 (FIYP…SNLK), and 375 to 395 (AAVG…GLIH). Asn-414 and Asn-476 each carry an N-linked (GlcNAc...) asparagine glycan.

This sequence belongs to the glycosyltransferase 22 family. PIGB subfamily.

Its subcellular location is the endoplasmic reticulum membrane. The protein operates within glycolipid biosynthesis; glycosylphosphatidylinositol-anchor biosynthesis. Its function is as follows. Alpha-1,2-mannosyltransferase that catalyzes the transfer of the third mannose, via an alpha-1,2 bond, from a dolichol-phosphate-mannose (Dol-P-Man) to an alpha-D-Man-(1-&gt;6)-2-PEtn-alpha-D-Man-(1-&gt;4)-alpha-D-GlcN-(1-&gt;6)-(1-radyl,2-acyl-sn-glycero-3-phospho)-2-acyl-inositol intermediate to generate an alpha-D-Man-(1-&gt;2)-alpha-D-Man-(1-&gt;6)-2-PEtn-alpha-D-Man-(1-&gt;4)-alpha-D-GlcN-(1-&gt;6)-(1-radyl,2-acyl-sn-glycero-3-phospho)-2-acyl-inositol (also termed H6) and participates in the nineth step of the glycosylphosphatidylinositol-anchor biosynthesis. May also add the third mannose to an alpha-D-Man-(1-&gt;6)-alpha-D-Man-(1-&gt;4)-alpha-D-GlcN-(1-&gt;6)-(1-radyl,2-acyl-sn-glycero-3-phospho)-2-acyl-inositol (also termed H3) intermediate generating an alpha-D-Man-(1-&gt;2)-alpha-D-Man-(1-&gt;6)-alpha-D-Man-(1-&gt;4)-alpha-D-GlcN-(1-&gt;6)-(1-radyl,2-acyl-sn-glycero-3-phospho)-2-acyl-inositol (also termed H4). The chain is GPI alpha-1,2-mannosyltransferase 3 from Xenopus laevis (African clawed frog).